Consider the following 387-residue polypeptide: Succinate--CoA ligase [ADP-forming] subunit beta (387 aa).

The ATP-grasp domain occupies 9-236; the sequence is KELFAKHNVP…RDATDPLELK (228 aa). ATP contacts are provided by residues Lys-45, 52–54, Ser-94, and Glu-99; that span reads GRG. Mg(2+) contacts are provided by Asn-191 and Asp-205. Substrate-binding positions include Asn-256 and 318-320; that span reads GIT.

Belongs to the succinate/malate CoA ligase beta subunit family. As to quaternary structure, heterotetramer of two alpha and two beta subunits. It depends on Mg(2+) as a cofactor.

The enzyme catalyses succinate + ATP + CoA = succinyl-CoA + ADP + phosphate. It carries out the reaction GTP + succinate + CoA = succinyl-CoA + GDP + phosphate. The protein operates within carbohydrate metabolism; tricarboxylic acid cycle; succinate from succinyl-CoA (ligase route): step 1/1. In terms of biological role, succinyl-CoA synthetase functions in the citric acid cycle (TCA), coupling the hydrolysis of succinyl-CoA to the synthesis of either ATP or GTP and thus represents the only step of substrate-level phosphorylation in the TCA. The beta subunit provides nucleotide specificity of the enzyme and binds the substrate succinate, while the binding sites for coenzyme A and phosphate are found in the alpha subunit. This Mycolicibacterium smegmatis (strain ATCC 700084 / mc(2)155) (Mycobacterium smegmatis) protein is Succinate--CoA ligase [ADP-forming] subunit beta.